The chain runs to 178 residues: Large ribosomal subunit protein bL17 (178 aa).

The protein belongs to the bacterial ribosomal protein bL17 family. Part of the 50S ribosomal subunit. Contacts protein L32.

The polypeptide is Large ribosomal subunit protein bL17 (Lachnospira eligens (strain ATCC 27750 / DSM 3376 / VPI C15-48 / C15-B4) (Eubacterium eligens)).